Reading from the N-terminus, the 131-residue chain is ATP synthase lipid-binding protein, mitochondrial (131 aa).

A mitochondrion-targeting transit peptide spans 1–56 (MLSAARLIAPAARSAIFSNAAVVRPLAAVSTQTQLVPAAPAQLSAVRSFQTTSVTK). Residues 72–92 (VGVAGSGAGIGTVFGSLIIGY) traverse the membrane as a helical segment. The residue at position 99 (Lys99) is an N6,N6,N6-trimethyllysine. The chain crosses the membrane as a helical span at residues 107–127 (ILGFALSEAMGLFCLMMAFLL).

This sequence belongs to the ATPase C chain family. In terms of assembly, F-type ATPases have 2 components, CF(1) - the catalytic core - and CF(0) - the membrane proton channel. CF(1) has five subunits: alpha(3), beta(3), gamma(1), delta(1), epsilon(1). CF(0) has three main subunits: a, b and c. In terms of processing, trimethylated by ATPSCKMT at Lys-99. Methylation may be required for proper incorporation of the C subunit into the ATP synthase complex and mitochondrial respiration.

The protein localises to the mitochondrion membrane. In terms of biological role, mitochondrial membrane ATP synthase (F(1)F(0) ATP synthase or Complex V) produces ATP from ADP in the presence of a proton gradient across the membrane which is generated by electron transport complexes of the respiratory chain. F-type ATPases consist of two structural domains, F(1) - containing the extramembraneous catalytic core and F(0) - containing the membrane proton channel, linked together by a central stalk and a peripheral stalk. During catalysis, ATP synthesis in the catalytic domain of F(1) is coupled via a rotary mechanism of the central stalk subunits to proton translocation. Part of the complex F(0) domain. A homomeric c-ring of probably 10 subunits is part of the complex rotary element. The sequence is that of ATP synthase lipid-binding protein, mitochondrial from Manduca sexta (Tobacco hawkmoth).